We begin with the raw amino-acid sequence, 245 residues long: 1-(5-phosphoribosyl)-5-[(5-phosphoribosylamino)methylideneamino] imidazole-4-carboxamide isomerase (245 aa).

The Proton acceptor role is filled by Asp-8. The active-site Proton donor is Asp-130.

The protein belongs to the HisA/HisF family.

The protein resides in the cytoplasm. It carries out the reaction 1-(5-phospho-beta-D-ribosyl)-5-[(5-phospho-beta-D-ribosylamino)methylideneamino]imidazole-4-carboxamide = 5-[(5-phospho-1-deoxy-D-ribulos-1-ylimino)methylamino]-1-(5-phospho-beta-D-ribosyl)imidazole-4-carboxamide. It functions in the pathway amino-acid biosynthesis; L-histidine biosynthesis; L-histidine from 5-phospho-alpha-D-ribose 1-diphosphate: step 4/9. The protein is 1-(5-phosphoribosyl)-5-[(5-phosphoribosylamino)methylideneamino] imidazole-4-carboxamide isomerase of Teredinibacter turnerae (strain ATCC 39867 / T7901).